We begin with the raw amino-acid sequence, 686 residues long: Glycine--tRNA ligase beta subunit (686 aa).

This sequence belongs to the class-II aminoacyl-tRNA synthetase family. Tetramer of two alpha and two beta subunits.

Its subcellular location is the cytoplasm. It catalyses the reaction tRNA(Gly) + glycine + ATP = glycyl-tRNA(Gly) + AMP + diphosphate. The protein is Glycine--tRNA ligase beta subunit of Geobacter metallireducens (strain ATCC 53774 / DSM 7210 / GS-15).